The primary structure comprises 67 residues: DNA-directed RNA polymerase subunit omega (67 aa).

Belongs to the RNA polymerase subunit omega family. In terms of assembly, the RNAP catalytic core consists of 2 alpha, 1 beta, 1 beta' and 1 omega subunit. When a sigma factor is associated with the core the holoenzyme is formed, which can initiate transcription.

It catalyses the reaction RNA(n) + a ribonucleoside 5'-triphosphate = RNA(n+1) + diphosphate. Functionally, promotes RNA polymerase assembly. Latches the N- and C-terminal regions of the beta' subunit thereby facilitating its interaction with the beta and alpha subunits. In Bordetella pertussis (strain Tohama I / ATCC BAA-589 / NCTC 13251), this protein is DNA-directed RNA polymerase subunit omega.